A 962-amino-acid chain; its full sequence is Leucine-rich repeat-containing G-protein coupled receptor 6 (962 aa).

The first 16 residues, 1 to 16, serve as a signal peptide directing secretion; that stretch reads MLVVLLILHAVSCAHS. The LRRNT domain occupies 20-60; it reads PGAAVPVKQCPSACQCEEDGILLLVDCSEQGLSSVPTDLSP. LRR repeat units lie at residues 38–58, 59–82, 83–106, 107–131, 133–154, 155–178, 179–202, 203–226, 228–250, 251–273, 275–297, 298–321, 322–344, 345–368, 370–390, 391–414, and 416–438; these read DGIL…PTDL, SPLT…AFRN, LHFL…MLQG, LYNL…PWEL, NLLS…TLSG, MRSL…ALND, LSSL…AFRN, LSNL…CFEG, HSLE…IRTL, AKLQ…AFVG, PLLQ…AFQF, LPKL…LKGT, TSLQ…LCHL, LPKL…YHCT, LQEI…TFQQ, LGSL…AFFS, and QSLI…GLTS. Asparagine 71 carries N-linked (GlcNAc...) asparagine glycosylation. N-linked (GlcNAc...) asparagine glycosylation is present at asparagine 202. The next 7 helical transmembrane spans lie at 559-579, 590-610, 647-669, 679-699, 723-743, 766-786, and 801-821; these read GMWL…LTVF, FIIG…GTLA, SILF…RAYG, AAAV…LIGV, FMVA…GTYI, VAWL…LTFS, and SVVL…YLLF. Cysteine 633 and cysteine 708 are oxidised to a cystine.

The protein belongs to the G-protein coupled receptor 1 family.

Its subcellular location is the cell membrane. Receptor for R-spondins that potentiates the canonical Wnt signaling pathway. Upon binding to R-spondins (rspo1, rspo2, rspo3 or rspo4), associates with phosphorylated lrp6 and frizzled receptors that are activated by extracellular Wnt receptors, triggering the canonical Wnt signaling pathway to increase expression of target genes. In contrast to classical G-protein coupled receptors, does not activate heterotrimeric G-proteins to transduce the signal. In Danio rerio (Zebrafish), this protein is Leucine-rich repeat-containing G-protein coupled receptor 6 (lgr6).